Reading from the N-terminus, the 846-residue chain is MATPVQASTVIRVKPHHYIHVLDNNTNVTRVEVGPQTFTRQDHERVLNPTPLPMILIPPRQYCIIENPIIRDKEGKLVVDKFNQPKLRHGDQEIRFSQDPFPLYPGEVVIAQPVPLQVIQTNSALRLKCLRDFVEVKADKTTVSHIAGDEWLFEGPGTYYPRVEVQVVEPVRAVIIKENQALKLRARLSFVDRRDVVRQVGEEWLVRESGAYLPGVSEEIVGFIQALVLTDRIAYQLLATRSFTDSFGKVRKAGEEWIITQKDCDTYIPDVNEKVIRDIKAITLTNRQYCIVENPIDPKTGKNKLGHKELLQGDRTFFLMPGESLVKGIQNVNVLSEDEALLLSAKEEFVEKKGTTTIVHKPGDLWMIYGPCDYIPPIQVDVVERRKRIPLDVNEGIYVRDIKTGKVRSVHGSSYMLLPNEERWAKPLAPIVEELLKKSASRDQNEEHNESDRDSTKVITYRVPHNAAVQIFDYRKKEARVVFGPELVMLEPDEEFTVLSLSGKIPKRPNHIRSLALFLGPDFMTDLITVETADHARLSLKLSYNWHFKVEQDNPSKLFATSDFTGDLCKATGSLVRAAVAASTFDNFHKHSSDIIQQAVFGSTDGSSNDCLYFETNGLVITNIDVQSVEPVDQRTLDSLQKSVQLAIEITTKSQEATARQEAERLEQMARGELERQKIIDEAKNEESRSKLVQLQAQSAAVESTGQAVAEARARAEAAIIEAESEIKQARLSTRAIEIEALSEIENLKAKHIVEIQHIKSLNNLELIKAKESATIETTKFENYVEALGSDTIKSIAQAPEETKAKLLAGLGLKSFMITDGKSPLNLFDTANGLIADAQRSEVDEE.

Alanine 2 is modified (N-acetylalanine). MVP repeat units follow at residues alanine 2–arginine 60, glutamine 61–proline 115, leucine 116–arginine 172, alanine 173–glutamine 225, alanine 226–lysine 280, alanine 281–valine 332, asparagine 333–arginine 388, isoleucine 389–valine 458, and isoleucine 459–proline 521.

As to quaternary structure, the vault ribonucleoprotein particle is a huge (400 A x 670 A) cage structure of 12.9 MDa. It consists of a dimer of half-vaults, with each half-vault comprising 39 identical major vault protein (MVP) chains. Dictyostelium is one of the few organisms in which the major component is actually two proteins (alpha and beta).

The protein resides in the cytoplasm. It is found in the nucleus. Functionally, unknown, though MVP-beta is required for normal vault structure. The chain is Major vault protein beta (mvpB) from Dictyostelium discoideum (Social amoeba).